The following is a 91-amino-acid chain: Large ribosomal subunit protein bL31B (91 aa).

The protein belongs to the bacterial ribosomal protein bL31 family. Type B subfamily. Part of the 50S ribosomal subunit.

The chain is Large ribosomal subunit protein bL31B from Neisseria meningitidis serogroup C (strain 053442).